Reading from the N-terminus, the 421-residue chain is Glycosaminoglycan xylosylkinase homolog (421 aa).

Positions M1–G21 are cleaved as a signal peptide. N-linked (GlcNAc...) asparagine glycosylation occurs at N83. 2 residues coordinate ATP: Q131 and K147. D166 is a binding site for Mn(2+). Intrachain disulfides connect C225–C240 and C230–C233. ATP is bound at residue I252–V255. 2 cysteine pairs are disulfide-bonded: C285/C351 and C352/C409. D314 is an active-site residue. E319 and D329 together coordinate ATP. Residue D329 participates in Mn(2+) binding.

It belongs to the FAM20 family. Mn(2+) is required as a cofactor.

The protein resides in the golgi apparatus. It localises to the endoplasmic reticulum. The catalysed reaction is 3-O-(beta-D-galactosyl-(1-&gt;3)-beta-D-galactosyl-(1-&gt;4)-beta-D-xylosyl)-L-seryl-[protein] + ATP = 3-O-(beta-D-galactosyl-(1-&gt;3)-beta-D-galactosyl-(1-&gt;4)-beta-D-2-O-phosphoxylosyl)-L-seryl-[protein] + ADP + H(+). Kylose kinase that mediates the 2-O-phosphorylation of xylose in the glycosaminoglycan-protein linkage region of proteoglycans. The chain is Glycosaminoglycan xylosylkinase homolog from Drosophila melanogaster (Fruit fly).